The chain runs to 440 residues: Glucoside xylosyltransferase 1 (440 aa).

The Cytoplasmic segment spans residues 1-6 (MRRYLR). The chain crosses the membrane as a helical; Signal-anchor for type II membrane protein span at residues 7-29 (VVVLCVACGFCSLLYAFSQLAVS). Residues 30-440 (LEEGTGGGGG…DRYARSPKEK (411 aa)) are Lumenal-facing. 3 N-linked (GlcNAc...) asparagine glycosylation sites follow: Asn-173, Asn-237, and Asn-278.

It belongs to the glycosyltransferase 8 family.

It localises to the membrane. It catalyses the reaction 3-O-(beta-D-glucosyl)-L-seryl-[EGF-like domain protein] + UDP-alpha-D-xylose = 3-O-[alpha-D-xylosyl-(1-&gt;3)-beta-D-glucosyl]-L-seryl-[EGF-like domain protein] + UDP + H(+). In terms of biological role, glycosyltransferase which elongates the O-linked glucose attached to EGF-like repeats in the extracellular domain of Notch proteins by catalyzing the addition of xylose. The polypeptide is Glucoside xylosyltransferase 1 (GXYLT1) (Homo sapiens (Human)).